A 158-amino-acid polypeptide reads, in one-letter code: UPF0758 protein VC_1786 (158 aa).

One can recognise an MPN domain in the interval 37–158; the sequence is TFARTENTTE…SVSFAERGWL (122 aa). Residues H108, H110, and D121 each coordinate Zn(2+). Residues 108 to 121 carry the JAMM motif motif; sequence HNHPSGDPEPSQAD.

The protein belongs to the UPF0758 family.

In Vibrio cholerae serotype O1 (strain ATCC 39315 / El Tor Inaba N16961), this protein is UPF0758 protein VC_1786.